Reading from the N-terminus, the 216-residue chain is Ras-related protein Rab-5C (216 aa).

Residues S30, A31, G33, K34, S35, S36, H47, E48, T53, and G79 each contribute to the GTP site. S35 contacts Mg(2+). 2 short sequence motifs (switch) span residues 45–57 and 78–94; these read QFHE…IGAA and AGQE…YRGA. A Mg(2+)-binding site is contributed by T53. At S85 the chain carries Phosphoserine. Residues N134, K135, D137, A165, and K166 each coordinate GTP. The interval 185 to 216 is disordered; it reads NEPQNAAGAPGRNRGVDLQENNPASRSQCCSN. Polar residues predominate over residues 203–216; that stretch reads QENNPASRSQCCSN. Residues C213 and C214 are each lipidated (S-geranylgeranyl cysteine).

Belongs to the small GTPase superfamily. Rab family. Interacts with EEA1 and INCA1. Interacts with GDI1, GDI2, CHML and CHM; phosphorylation at Ser-85 disrupts this interaction. Requires Mg(2+) as cofactor. In terms of processing, phosphorylation of Ser-85 in the switch II region by LRRK2 prevents the association of RAB regulatory proteins, including CHM, CHML and RAB GDP dissociation inhibitors GDI1 and GDI2.

It is found in the cell membrane. It localises to the early endosome membrane. Its subcellular location is the melanosome. The enzyme catalyses GTP + H2O = GDP + phosphate + H(+). With respect to regulation, regulated by guanine nucleotide exchange factors (GEFs) which promote the exchange of bound GDP for free GTP. Regulated by GTPase activating proteins (GAPs) which increase the GTP hydrolysis activity. Inhibited by GDP dissociation inhibitors (GDIs). Functionally, the small GTPases Rab are key regulators of intracellular membrane trafficking, from the formation of transport vesicles to their fusion with membranes. Rabs cycle between an inactive GDP-bound form and an active GTP-bound form that is able to recruit to membranes different sets of downstream effectors directly responsible for vesicle formation, movement, tethering and fusion. This Bos taurus (Bovine) protein is Ras-related protein Rab-5C (RAB5C).